We begin with the raw amino-acid sequence, 148 residues long: Lysozyme C (148 aa).

An N-terminal signal peptide occupies residues 1–18 (MKALIILGLVLLSVTVQG). The 130-residue stretch at 19 to 148 (KIFERCELAR…VSQYVKGCGV (130 aa)) folds into the C-type lysozyme domain. 4 cysteine pairs are disulfide-bonded: Cys-24/Cys-146, Cys-48/Cys-134, Cys-83/Cys-99, and Cys-95/Cys-113. Catalysis depends on residues Glu-53 and Asp-71.

The protein belongs to the glycosyl hydrolase 22 family. In terms of assembly, monomer.

The protein resides in the secreted. The catalysed reaction is Hydrolysis of (1-&gt;4)-beta-linkages between N-acetylmuramic acid and N-acetyl-D-glucosamine residues in a peptidoglycan and between N-acetyl-D-glucosamine residues in chitodextrins.. Its function is as follows. Lysozymes have primarily a bacteriolytic function; those in tissues and body fluids are associated with the monocyte-macrophage system and enhance the activity of immunoagents. In Pygathrix nemaeus (Red-shanked douc langur), this protein is Lysozyme C (LYZ).